Reading from the N-terminus, the 100-residue chain is Small ribosomal subunit protein uS14 (100 aa).

This sequence belongs to the universal ribosomal protein uS14 family. As to quaternary structure, part of the 30S ribosomal subunit. Contacts proteins S3 and S10.

Its function is as follows. Binds 16S rRNA, required for the assembly of 30S particles and may also be responsible for determining the conformation of the 16S rRNA at the A site. This Prochlorococcus marinus (strain MIT 9301) protein is Small ribosomal subunit protein uS14.